The following is a 409-amino-acid chain: Elongation factor Tu (409 aa).

Positions 10–214 (KPHVNVGTIG…AVDSYIPTPE (205 aa)) constitute a tr-type G domain. The tract at residues 19 to 26 (GHVDHGKT) is G1. Residue 19–26 (GHVDHGKT) participates in GTP binding. Threonine 26 is a binding site for Mg(2+). The interval 60–64 (GITIN) is G2. The G3 stretch occupies residues 81–84 (DCPG). Residues 81-85 (DCPGH) and 136-139 (NKVD) contribute to the GTP site. The G4 stretch occupies residues 136-139 (NKVD). The segment at 174-176 (SAL) is G5.

This sequence belongs to the TRAFAC class translation factor GTPase superfamily. Classic translation factor GTPase family. EF-Tu/EF-1A subfamily. Monomer.

It localises to the cytoplasm. It carries out the reaction GTP + H2O = GDP + phosphate + H(+). In terms of biological role, GTP hydrolase that promotes the GTP-dependent binding of aminoacyl-tRNA to the A-site of ribosomes during protein biosynthesis. The polypeptide is Elongation factor Tu (Synechococcus sp. (strain JA-3-3Ab) (Cyanobacteria bacterium Yellowstone A-Prime)).